Consider the following 248-residue polypeptide: ATP synthase subunit a (248 aa).

A run of 6 helical transmembrane segments spans residues 27 to 47 (FTNS…LMLV), 83 to 103 (FFPL…IGIV), 113 to 133 (LIVT…YGFS), 142 to 162 (LFVP…IEVI), 192 to 212 (FVAM…LPLG), and 215 to 235 (IALT…FAIL).

Belongs to the ATPase A chain family. F-type ATPases have 2 components, CF(1) - the catalytic core - and CF(0) - the membrane proton channel. CF(1) has five subunits: alpha(3), beta(3), gamma(1), delta(1), epsilon(1). CF(0) has four main subunits: a, b, b' and c.

Its subcellular location is the cell inner membrane. In terms of biological role, key component of the proton channel; it plays a direct role in the translocation of protons across the membrane. This chain is ATP synthase subunit a, found in Rhodopseudomonas palustris (strain ATCC BAA-98 / CGA009).